Consider the following 121-residue polypeptide: Small ribosomal subunit protein uS13 (121 aa).

Positions 93-121 are disordered; sequence RHLPVRGQNTKNNARTRKGPAVSIAGKKK.

It belongs to the universal ribosomal protein uS13 family. Part of the 30S ribosomal subunit. Forms a loose heterodimer with protein S19. Forms two bridges to the 50S subunit in the 70S ribosome.

Its function is as follows. Located at the top of the head of the 30S subunit, it contacts several helices of the 16S rRNA. In the 70S ribosome it contacts the 23S rRNA (bridge B1a) and protein L5 of the 50S subunit (bridge B1b), connecting the 2 subunits; these bridges are implicated in subunit movement. Contacts the tRNAs in the A and P-sites. In Ligilactobacillus salivarius (strain UCC118) (Lactobacillus salivarius), this protein is Small ribosomal subunit protein uS13.